A 423-amino-acid chain; its full sequence is UPF0229 protein VP0986 (423 aa).

Residues 69-112 (GGVRERVHPGNDQFITGDKIERPKGGGQGSGSGEGNASPDGEGQ) are disordered. Over residues 93–102 (GGGQGSGSGE) the composition is skewed to gly residues.

Belongs to the UPF0229 family.

The sequence is that of UPF0229 protein VP0986 from Vibrio parahaemolyticus serotype O3:K6 (strain RIMD 2210633).